Reading from the N-terminus, the 910-residue chain is Eukaryotic translation initiation factor 3 subunit C (910 aa).

Residues 1-21 are disordered; it reads MSRFFANGSESESESSEEEIQ. Residues 11–20 show a composition bias toward acidic residues; the sequence is SESESSEEEI. 4 positions are modified to phosphoserine: Ser34, Ser165, Ser176, and Ser185. The segment at 157–279 is disordered; that stretch reads FREAPDQESE…IRKRAEDDED (123 aa). The segment covering 162–186 has biased composition (acidic residues); sequence DQESEAEDEVVALESDGGDAGDDSD. Low complexity predominate over residues 194-207; that stretch reads AVPKAVKSAPAKAA. The span at 209–235 shows a compositional bias: acidic residues; that stretch reads ADDDDSDDSIDWDSDSESETESSDDEN. A compositionally biased stretch (basic and acidic residues) spans 240–268; the sequence is MRERFLKRTTEKEEKDDDKRKDKRKEQKT. A PCI domain is found at 639–815; the sequence is FHMHINLELL…ETVGMHRSEP (177 aa). Residues 847–910 are disordered; sequence FFQRGNMGNR…QQQVQTIDEE (64 aa). Over residues 862 to 874 the composition is skewed to low complexity; sequence NRNQNNQGGNWLG. Residues 882-891 are compositionally biased toward basic residues; that stretch reads RNRNQRGHHK. Low complexity predominate over residues 895 to 910; sequence DRQQQQQQQVQTIDEE.

The protein belongs to the eIF-3 subunit C family. Component of the eukaryotic translation initiation factor 3 (eIF-3) complex. The eIF-3 complex interacts with pix.

The protein resides in the cytoplasm. Component of the eukaryotic translation initiation factor 3 (eIF-3) complex, which is involved in protein synthesis of a specialized repertoire of mRNAs and, together with other initiation factors, stimulates binding of mRNA and methionyl-tRNAi to the 40S ribosome. The eIF-3 complex specifically targets and initiates translation of a subset of mRNAs involved in cell proliferation. The protein is Eukaryotic translation initiation factor 3 subunit C of Drosophila melanogaster (Fruit fly).